The chain runs to 181 residues: ATP-dependent protease subunit HslV (181 aa).

Residue threonine 8 is part of the active site. Residues glycine 165, cysteine 168, and threonine 171 each coordinate Na(+).

Belongs to the peptidase T1B family. HslV subfamily. In terms of assembly, a double ring-shaped homohexamer of HslV is capped on each side by a ring-shaped HslU homohexamer. The assembly of the HslU/HslV complex is dependent on binding of ATP.

The protein localises to the cytoplasm. It catalyses the reaction ATP-dependent cleavage of peptide bonds with broad specificity.. Its activity is regulated as follows. Allosterically activated by HslU binding. Protease subunit of a proteasome-like degradation complex believed to be a general protein degrading machinery. This Oceanobacillus iheyensis (strain DSM 14371 / CIP 107618 / JCM 11309 / KCTC 3954 / HTE831) protein is ATP-dependent protease subunit HslV.